The sequence spans 187 residues: UPF0669 protein C6orf120 homolog (187 aa).

The signal sequence occupies residues 1–23; it reads MVEYWKRNFFMVLVLQAFYLANC. The N-linked (GlcNAc...) asparagine glycan is linked to N47.

This sequence belongs to the UPF0669 family.

The protein localises to the secreted. The sequence is that of UPF0669 protein C6orf120 homolog from Xenopus tropicalis (Western clawed frog).